The primary structure comprises 374 residues: Type IV secretion system protein PtlG homolog (374 aa).

Residues 38-56 form a helical membrane-spanning segment; sequence WMFALVAVALSCLLATGIW. The segment at 86–117 is disordered; the sequence is HPREPEPAPLPDMPAAPDPILPQPRPAPPVPP. Residues 92–117 show a composition bias toward pro residues; it reads PAPLPDMPAAPDPILPQPRPAPPVPP.

It belongs to the TrbI/VirB10 family.

It is found in the cell membrane. This is Type IV secretion system protein PtlG homolog (ptlG) from Bordetella bronchiseptica (strain ATCC BAA-588 / NCTC 13252 / RB50) (Alcaligenes bronchisepticus).